The chain runs to 689 residues: DNA ligase (689 aa).

NAD(+) contacts are provided by residues 40–44 (DSEYD), 89–90 (SL), and E121. The active-site N6-AMP-lysine intermediate is the K123. Positions 144, 179, 295, and 319 each coordinate NAD(+). Zn(2+) contacts are provided by C413, C416, C431, and C437. The region spanning 610–689 (REQSSLTDKI…EEWLTLIKNV (80 aa)) is the BRCT domain.

It belongs to the NAD-dependent DNA ligase family. LigA subfamily. Mg(2+) is required as a cofactor. Mn(2+) serves as cofactor.

The enzyme catalyses NAD(+) + (deoxyribonucleotide)n-3'-hydroxyl + 5'-phospho-(deoxyribonucleotide)m = (deoxyribonucleotide)n+m + AMP + beta-nicotinamide D-nucleotide.. DNA ligase that catalyzes the formation of phosphodiester linkages between 5'-phosphoryl and 3'-hydroxyl groups in double-stranded DNA using NAD as a coenzyme and as the energy source for the reaction. It is essential for DNA replication and repair of damaged DNA. The protein is DNA ligase of Rickettsia massiliae (strain Mtu5).